The primary structure comprises 334 residues: 6-phosphogluconolactonase (334 aa).

It belongs to the cycloisomerase 2 family.

It carries out the reaction 6-phospho-D-glucono-1,5-lactone + H2O = 6-phospho-D-gluconate + H(+). Its pathway is carbohydrate degradation; pentose phosphate pathway; D-ribulose 5-phosphate from D-glucose 6-phosphate (oxidative stage): step 2/3. Functionally, catalyzes the hydrolysis of 6-phosphogluconolactone to 6-phosphogluconate. This Yersinia pseudotuberculosis serotype O:1b (strain IP 31758) protein is 6-phosphogluconolactonase.